A 276-amino-acid chain; its full sequence is Adenylate kinase (276 aa).

Residue 52–57 (GAGKGT) participates in ATP binding. The segment at 72 to 101 (ATGDMLRAQVAAKTPLGREAKKIMDAGGLV) is NMP. Residues Thr73, Arg78, 99-101 (GLV), 128-131 (GFPR), and Gln135 contribute to the AMP site. The tract at residues 169 to 206 (GRLVHPASGRSYHKIFNPPKAPMTDDVTGEPLIQRSDD) is LID. Residues Arg170 and 179–180 (SY) each bind ATP. 2 residues coordinate AMP: Arg203 and Arg214. ATP is bound at residue Gln242.

Belongs to the adenylate kinase family. AK2 subfamily. Monomer.

The protein resides in the cytoplasm. Its subcellular location is the cytosol. The protein localises to the mitochondrion intermembrane space. The catalysed reaction is AMP + ATP = 2 ADP. Catalyzes the reversible transfer of the terminal phosphate group between ATP and AMP. Plays an important role in cellular energy homeostasis and in adenine nucleotide metabolism. Adenylate kinase activity is critical for regulation of the phosphate utilization and the AMP de novo biosynthesis pathways. This Pyrenophora tritici-repentis (strain Pt-1C-BFP) (Wheat tan spot fungus) protein is Adenylate kinase (adk1).